Here is a 383-residue protein sequence, read N- to C-terminus: Glutaminyl-peptide cyclotransferase-like protein (383 aa).

A helical transmembrane segment spans residues 33-53 (VQFLPLLLLALAMGLAFYIVW). Cysteines 168 and 192 form a disulfide. Asp-187 contacts Zn(2+). The active-site Proton acceptor is Glu-226. Residue Glu-227 coordinates Zn(2+). The active-site Proton acceptor is the Asp-270. His-352 lines the Zn(2+) pocket.

It belongs to the glutaminyl-peptide cyclotransferase family. In terms of tissue distribution, detected in thalamus, hippocampus, brain cortex, cerebellum, kidney, lung and liver, and at low levels in heart and spleen.

It is found in the golgi apparatus membrane. It carries out the reaction N-terminal L-glutaminyl-[peptide] = N-terminal 5-oxo-L-prolyl-[peptide] + NH4(+). In terms of biological role, responsible for the biosynthesis of pyroglutamyl peptides. This chain is Glutaminyl-peptide cyclotransferase-like protein (Qpctl), found in Mus musculus (Mouse).